We begin with the raw amino-acid sequence, 187 residues long: Biphenyl 2,3-dioxygenase subunit beta (187 aa).

It belongs to the bacterial ring-hydroxylating dioxygenase beta subunit family. As to quaternary structure, heterohexamer consisting of three BphA1 subunits and three BphA2 subunits. The multicomponent biphenyl dioxygenase system is composed of a ferredoxin reductase (BphA4), a ferredoxin (BphA3), and a terminal oxygenase (BphA1A2).

The enzyme catalyses biphenyl + NADH + O2 + H(+) = (2R,3S)-3-phenylcyclohexa-3,5-diene-1,2-diol + NAD(+). It functions in the pathway xenobiotic degradation; biphenyl degradation; 2-hydroxy-2,4-pentadienoate and benzoate from biphenyl: step 1/4. Part of the oxygenase component of the biphenyl dioxygenase system that catalyzes the stereospecific dihydroxylation of the aromatic ring of biphenyl, yielding a dihydrodiol compound. Is likely involved in biphenyl degradation that allows growth of Rhodococcus sp. strain RHA1 on biphenyl as the sole source of carbon and energy. Can also use naphtalene and 4-chlorobiphenyl (4-CB) as substrates, as well as some polychlorinated biphenyls (PCB) such as 2,2'-dichlorobiphenyl, 2,3-dichlorobiphenyl and 2,5,2'-trichlorobiphenyl. Exhibits weak activity toward dibenzofuran and dibenzo-p-dioxin. Electrons are transferred from NADH to the [2Fe-2S] cluster in BphA1 via FAD of BphA4 and [2Fe-2S] cluster of BphA3. The polypeptide is Biphenyl 2,3-dioxygenase subunit beta (Rhodococcus jostii (strain RHA1)).